The chain runs to 186 residues: Large ribosomal subunit protein uL5m (186 aa).

It belongs to the universal ribosomal protein uL5 family.

Its subcellular location is the mitochondrion. This chain is Large ribosomal subunit protein uL5m (RPL5), found in Solanum tuberosum (Potato).